The sequence spans 764 residues: 5-methyltetrahydropteroyltriglutamate--homocysteine methyltransferase (764 aa).

5-methyltetrahydropteroyltri-L-glutamate is bound by residues 16-19 (RELK) and Lys-115. Residues 435-437 (IGS) and Glu-488 each bind L-homocysteine. L-methionine-binding positions include 435-437 (IGS) and Glu-488. 5-methyltetrahydropteroyltri-L-glutamate is bound by residues 519-520 (RC) and Trp-565. Asp-603 provides a ligand contact to L-homocysteine. Residue Asp-603 participates in L-methionine binding. A 5-methyltetrahydropteroyltri-L-glutamate-binding site is contributed by Glu-609. His-645, Cys-647, and Glu-669 together coordinate Zn(2+). The active-site Proton donor is the His-698. Cys-730 is a binding site for Zn(2+).

The protein belongs to the vitamin-B12 independent methionine synthase family. Requires Zn(2+) as cofactor.

The catalysed reaction is 5-methyltetrahydropteroyltri-L-glutamate + L-homocysteine = tetrahydropteroyltri-L-glutamate + L-methionine. Its pathway is amino-acid biosynthesis; L-methionine biosynthesis via de novo pathway; L-methionine from L-homocysteine (MetE route): step 1/1. Catalyzes the transfer of a methyl group from 5-methyltetrahydrofolate to homocysteine resulting in methionine formation. This chain is 5-methyltetrahydropteroyltriglutamate--homocysteine methyltransferase, found in Burkholderia pseudomallei (strain K96243).